We begin with the raw amino-acid sequence, 434 residues long: Protein arginine N-methyltransferase 2 (434 aa).

The interval 155 to 198 (IQGEETTEEERKEEEPSNTSDIIDEQKVEQPKEDLKEDPSSNQE) is disordered. Over residues 178-193 (DEQKVEQPKEDLKEDP) the composition is skewed to basic and acidic residues. An RMT2 domain is found at 193–434 (PSSNQETYLK…YHPEARFMDV (242 aa)). S-adenosyl-L-methionine-binding positions include tyrosine 200, methionine 230, 258 to 263 (FGMGII), 279 to 281 (EAH), 306 to 307 (WQ), and aspartate 327.

It belongs to the class I-like SAM-binding methyltransferase superfamily. RMT2 methyltransferase family. As to quaternary structure, monomer.

It is found in the cytoplasm. Its subcellular location is the nucleus. In terms of biological role, S-adenosyl-L-methionine-dependent protein-arginine N-methyltransferase that methylates the delta-nitrogen atom of arginine residues to form N5-methylarginine (type IV) in target proteins. Monomethylates ribosomal protein L12. This is Protein arginine N-methyltransferase 2 from Debaryomyces hansenii (strain ATCC 36239 / CBS 767 / BCRC 21394 / JCM 1990 / NBRC 0083 / IGC 2968) (Yeast).